We begin with the raw amino-acid sequence, 462 residues long: tRNA-2-methylthio-N(6)-dimethylallyladenosine synthase (462 aa).

Positions 2-117 (KRYFIHTFGC…LPDIIGRVSA (116 aa)) constitute an MTTase N-terminal domain. Cysteine 11, cysteine 47, cysteine 80, cysteine 157, cysteine 161, and cysteine 164 together coordinate [4Fe-4S] cluster. The 230-residue stretch at 143–372 (SRGKVTEFVT…QKLQRRISGE (230 aa)) folds into the Radical SAM core domain. In terms of domain architecture, TRAM spans 375–437 (AALVGSEVEV…PNQLAGKQVA (63 aa)).

It belongs to the methylthiotransferase family. MiaB subfamily. Monomer. [4Fe-4S] cluster is required as a cofactor.

The protein localises to the cytoplasm. The catalysed reaction is N(6)-dimethylallyladenosine(37) in tRNA + (sulfur carrier)-SH + AH2 + 2 S-adenosyl-L-methionine = 2-methylsulfanyl-N(6)-dimethylallyladenosine(37) in tRNA + (sulfur carrier)-H + 5'-deoxyadenosine + L-methionine + A + S-adenosyl-L-homocysteine + 2 H(+). Functionally, catalyzes the methylthiolation of N6-(dimethylallyl)adenosine (i(6)A), leading to the formation of 2-methylthio-N6-(dimethylallyl)adenosine (ms(2)i(6)A) at position 37 in tRNAs that read codons beginning with uridine. This Myxococcus xanthus (strain DK1622) protein is tRNA-2-methylthio-N(6)-dimethylallyladenosine synthase.